We begin with the raw amino-acid sequence, 382 residues long: V-set and immunoglobulin domain-containing protein 1 (382 aa).

The N-terminal stretch at 1–21 (MGLTFWKVFLILNCLAGQVNG) is a signal peptide. The Ig-like V-type domain maps to 22-133 (VQVTIPDSFV…FFGKNQGTIS (112 aa)). Topologically, residues 22 to 234 (VQVTIPDSFV…DLTTPYPGIG (213 aa)) are extracellular. N-linked (GlcNAc...) asparagine glycosylation is present at asparagine 32. 2 disulfides stabilise this stretch: cysteine 43–cysteine 116 and cysteine 161–cysteine 211. The region spanning 140 to 227 (PSKPFCSIQG…GNSSCEIDLT (88 aa)) is the Ig-like C2-type domain. Asparagine 200 and asparagine 219 each carry an N-linked (GlcNAc...) asparagine glycan. Residues 235 to 255 (IIVGAFVGTLIGVIIIISVVW) traverse the membrane as a helical segment. The Cytoplasmic segment spans residues 256–382 (FVRRKVKAKG…FCDEEKVIKP (127 aa)). The disordered stretch occupies residues 266–382 (KERKRNSKTT…FCDEEKVIKP (117 aa)). Residues 273-285 (KTTTELEPMTKIN) are compositionally biased toward polar residues. Residues 286 to 298 (QRTEGETMPREDA) show a composition bias toward basic and acidic residues. Positions 327–341 (EPEPALQPTVEPPSG) are enriched in pro residues.

The protein resides in the membrane. The protein is V-set and immunoglobulin domain-containing protein 1 (VSIG1) of Bos taurus (Bovine).